The sequence spans 142 residues: Alpha-lactalbumin (142 aa).

The signal sequence occupies residues 1-19 (MMSFVSLLLVGILFHATQA). In terms of domain architecture, C-type lysozyme spans 20–142 (EQLTKCEVFQ…KLDQWLCEKL (123 aa)). Cystine bridges form between Cys25/Cys139, Cys47/Cys130, Cys80/Cys96, and Cys92/Cys110. N-linked (GlcNAc...) asparagine glycosylation is found at Asn64 and Asn93. Positions 98, 101, 103, 106, and 107 each coordinate Ca(2+).

Belongs to the glycosyl hydrolase 22 family. As to quaternary structure, lactose synthase (LS) is a heterodimer of a catalytic component, beta1,4-galactosyltransferase (beta4Gal-T1) and a regulatory component, alpha-lactalbumin (LA). Mammary gland specific. Secreted in milk.

Its subcellular location is the secreted. Functionally, regulatory subunit of lactose synthase, changes the substrate specificity of galactosyltransferase in the mammary gland making glucose a good acceptor substrate for this enzyme. This enables LS to synthesize lactose, the major carbohydrate component of milk. In other tissues, galactosyltransferase transfers galactose onto the N-acetylglucosamine of the oligosaccharide chains in glycoproteins. In Capra hircus (Goat), this protein is Alpha-lactalbumin (LALBA).